The following is a 505-amino-acid chain: ATP synthase subunit alpha, chloroplastic (505 aa).

170 to 177 is a binding site for ATP; sequence GDRQTGKT.

The protein belongs to the ATPase alpha/beta chains family. In terms of assembly, F-type ATPases have 2 components, CF(1) - the catalytic core - and CF(0) - the membrane proton channel. CF(1) has five subunits: alpha(3), beta(3), gamma(1), delta(1), epsilon(1). CF(0) has four main subunits: a, b, b' and c.

Its subcellular location is the plastid. The protein resides in the chloroplast thylakoid membrane. It carries out the reaction ATP + H2O + 4 H(+)(in) = ADP + phosphate + 5 H(+)(out). Its function is as follows. Produces ATP from ADP in the presence of a proton gradient across the membrane. The alpha chain is a regulatory subunit. The polypeptide is ATP synthase subunit alpha, chloroplastic (Zygnema circumcarinatum (Green alga)).